A 1125-amino-acid chain; its full sequence is Telomerase reverse transcriptase (1125 aa).

Positions 1–234 (MPRAPRCRAV…ARRRRSSARG (234 aa)) are RNA-interacting domain 1. Positions 58-199 (VPWDAQPPPA…RQVGGTRAGF (142 aa)) are GQ motif. The segment at 137-141 (WGLLL) is required for regulating specificity for telomeric DNA and for processivity for primer elongation. A disordered region spans residues 186–308 (RRPTRQVGGT…WRLSPSEGEP (123 aa)). A compositionally biased stretch (basic residues) spans 224-243 (GARRRRSSARGRLPPAKRPR). A Bipartite nuclear localization signal motif is present at residues 226–244 (RRRRSSARGRLPPAKRPRR). Ser-231 carries the post-translational modification Phosphoserine; by PKB/AKT1. The segment at 235–312 (RLPPAKRPRR…PSEGEPGAGA (78 aa)) is linker. 2 stretches are compositionally biased toward basic and acidic residues: residues 244–253 (RGLEPGRDLE) and 269–279 (DAAEAKSRKGD). The required for oligomerization stretch occupies residues 290–531 (GERGVGSASW…VPAAEHRQRE (242 aa)). The segment at 313 to 543 (CAETKRFLYC…LGRFLHWLMG (231 aa)) is RNA-interacting domain 2. The TFLY; involved in RNA binding signature appears at 316–321 (TKRFLY). Residues 364–514 (PRRPRRLPAR…MKVQDCAWLR (151 aa)) form a QFP motif region. The CP motif stretch occupies residues 385 to 405 (LGNHARSPYGALLRAHCPLPA). A Phosphoserine; by DYRK2 modification is found at Ser-450. Positions 598 to 928 (EVRQHQEARP…CLFPWCGLLL (331 aa)) constitute a Reverse transcriptase domain. At Tyr-700 the chain carries Phosphotyrosine; by SRC-type Tyr-kinases. Positions 705, 861, and 862 each coordinate Mg(2+). The segment at 907 to 921 (LGGAAPLQLPAHCLF) is required for oligomerization. Residues 923-927 (WCGLL) form a primer grip sequence region. Residues 929 to 1125 (DTRTLEVHGD…LTADFKTILD (197 aa)) are CTE.

The protein belongs to the reverse transcriptase family. Telomerase subfamily. In terms of assembly, catalytic component of the telomerase holoenzyme complex composed of one molecule of TERT, one molecule of WRAP53/TCAB1, two molecules of H/ACA ribonucleoprotein complex subunits DKC1, NOP10, NHP2 and GAR1, and a telomerase RNA template component (TERC). The telomerase holoenzyme complex is associated with TEP1, SMG6/EST1A and POT1. The molecular chaperone HSP90/P23 complex is required for correct assembly and stabilization of the active telomerase. Interacts directly with HSP90A and PTGES3. Interacts with HSPA1A; the interaction occurs in the absence of TERC and dissociates once the complex has formed. Interacts with RAN; the interaction promotes nuclear export of TERT. Interacts with XPO1. Interacts with PTPN11; the interaction retains TERT in the nucleus. Interacts with NCL (via RRM1 and C-terminal RRM4/Arg/Gly-rich domains); the interaction is important for nucleolar localization of TERT. Interacts with SMARCA4 (via the bromodomain); the interaction regulates Wnt-mediated signaling. Interacts with MCRS1 (isoform MCRS2); the interaction inhibits in vitro telomerase activity. Interacts with PIF1; the interaction has no effect on the elongation activity of TERT. Interacts with PML; the interaction recruits TERT to PML bodies and inhibits telomerase activity. Interacts with GNL3L. Interacts with isoform 1 and isoform 2 of NVL. Interacts with DHX36. Interacts with ATF7. In terms of processing, phosphorylation at Tyr-700 under oxidative stress leads to translocation of TERT to the cytoplasm and reduces its antiapoptotic activity. Dephosphorylated by SHP2/PTPN11 leading to nuclear retention. Phosphorylation at Ser-231 by the AKT pathway promotes nuclear location. Phosphorylation at the G2/M phase at Ser-450 by DYRK2 promotes ubiquitination by the EDVP complex and degradation. Post-translationally, ubiquitinated by the EDVP complex, a E3 ligase complex following phosphorylation at Ser-450 by DYRK2. Ubiquitinated leads to proteasomal degradation.

Its subcellular location is the nucleus. The protein localises to the nucleolus. It is found in the nucleoplasm. It localises to the chromosome. The protein resides in the telomere. Its subcellular location is the cytoplasm. The protein localises to the PML body. It catalyses the reaction DNA(n) + a 2'-deoxyribonucleoside 5'-triphosphate = DNA(n+1) + diphosphate. Functionally, telomerase is a ribonucleoprotein enzyme essential for the replication of chromosome termini in most eukaryotes. Active in progenitor and cancer cells. Inactive, or very low activity, in normal somatic cells. Catalytic component of the teleromerase holoenzyme complex whose main activity is the elongation of telomeres by acting as a reverse transcriptase that adds simple sequence repeats to chromosome ends by copying a template sequence within the RNA component of the enzyme. Catalyzes the RNA-dependent extension of 3'-chromosomal termini with the 6-nucleotide telomeric repeat unit, 5'-TTAGGG-3'. The catalytic cycle involves primer binding, primer extension and release of product once the template boundary has been reached or nascent product translocation followed by further extension. More active on substrates containing 2 or 3 telomeric repeats. Telomerase activity is regulated by a number of factors including telomerase complex-associated proteins, chaperones and polypeptide modifiers. Modulates Wnt signaling. Plays important roles in aging and antiapoptosis. This Bos taurus (Bovine) protein is Telomerase reverse transcriptase (TERT).